Here is a 466-residue protein sequence, read N- to C-terminus: Heat stress transcription factor A-5 (466 aa).

A DNA-binding region spans residues 21–115 (PAPFLVKTYE…LLKNIHRRKP (95 aa)). The interval 125-191 (SSTDQERAVL…KLLNFLETAI (67 aa)) is hydrophobic repeat HR-A/B. The Bipartite nuclear localization signal motif lies at 198-217 (KNFGKKVEQLDISAYNKKRR). Disordered regions lie at residues 215-248 (KRRL…GNIF), 272-300 (HSIQ…LTKR), and 422-466 (TERP…QLTL). Positions 218 to 233 (LPEVEQSKPPSEDSHL) are enriched in basic and acidic residues. An AHA motif is present at residues 414–423 (DVFWEQFLTE). 2 stretches are compositionally biased toward polar residues: residues 425–438 (PGSS…STYR) and 455–466 (LRNTKNIEQLTL). A Nuclear export signal motif is present at residues 461–466 (IEQLTL).

The protein belongs to the HSF family. Class A subfamily. As to quaternary structure, homotrimer. In terms of processing, exhibits temperature-dependent phosphorylation.

Its subcellular location is the cytoplasm. It is found in the nucleus. Transcriptional activator that specifically binds DNA sequence 5'-AGAAnnTTCT-3' known as heat shock promoter elements (HSE). The polypeptide is Heat stress transcription factor A-5 (HSFA5) (Arabidopsis thaliana (Mouse-ear cress)).